Here is a 158-residue protein sequence, read N- to C-terminus: Small ribosomal subunit protein uS7 (158 aa).

Belongs to the universal ribosomal protein uS7 family. In terms of assembly, part of the 30S ribosomal subunit. Contacts proteins S9 and S11.

In terms of biological role, one of the primary rRNA binding proteins, it binds directly to 16S rRNA where it nucleates assembly of the head domain of the 30S subunit. Is located at the subunit interface close to the decoding center, probably blocks exit of the E-site tRNA. The protein is Small ribosomal subunit protein uS7 of Flavobacterium johnsoniae (strain ATCC 17061 / DSM 2064 / JCM 8514 / BCRC 14874 / CCUG 350202 / NBRC 14942 / NCIMB 11054 / UW101) (Cytophaga johnsonae).